The following is a 470-amino-acid chain: Cytochrome P450 monooxygenase sirC (470 aa).

Residues 12-34 (LRGMVVGTIMLLCYRYGLALSIL) form a helical membrane-spanning segment. N399 carries N-linked (GlcNAc...) asparagine glycosylation. C410 lines the heme pocket.

The protein belongs to the cytochrome P450 family. The cofactor is heme.

The protein localises to the membrane. It functions in the pathway mycotoxin biosynthesis. Cytochrome P450 monooxygenase; part of the gene cluster that mediates the biosynthesis of sirodesmin PL, an epipolythiodioxopiperazine (ETP) characterized by a disulfide bridged cyclic dipeptide and that acts as a phytotoxin which is involved in the blackleg didease of canola. SirD catalyzes the O-prenylation of L-tyrosine (L-Tyr) in the presence of dimethylallyl diphosphate (DMAPP) to yield 4-O-dimethylallyl-L-Tyr, and therefore represents probably the first pathway-specific enzyme in the biosynthesis of sirodesmin PL. 4-O-dimethylallyl-L-Tyr, then undergoes condensation with L-Ser in a reaction catalyzed by the non-ribosomal peptide synthase sirP to form the diketopiperazine (DKP) backbone. Further bishydroxylation of the DKP performed by the cytochrome P450 monooxygenase sirC leads to the production of the intermediate phomamide. This step is essential to form the reactive thiol group required for toxicity of sirodesmin PL. The next steps of sirodesmin biosynthesis are not well understood yet, but some predictions could be made from intermediate compounds identification. Phomamide is converted into phomalizarine via oxidation, probably by sirT. Further oxidation, methylation (by sirM or sirN) and reduction steps convert phomalizarine to deacetyl sirodesmin. Finally, acetyltransferase sirH probably acetylates deacetyl sirodesmin to produce sirodesmin PL. The chain is Cytochrome P450 monooxygenase sirC from Leptosphaeria maculans (Blackleg fungus).